A 547-amino-acid chain; its full sequence is MTKTDPAPMAPPPRGEEEEEEEEDEPVPEAPSPTQERRQKPVVHPSAPAPLPKDYAFTFFDPNDPACQEILFDPQTTIPELFAIVRQWVPQVQHKIDVIGNEILRRGCHVNDRDGLTDMTLLHYACKAGAHGVGDPAAAVRLSQQLLALGADVTLRSRWTNMNALHYAAYFDVPDLVRVLLKGARPRVVNSTCSDFNHGSALHIAASSLCLGAAKCLLEHGANPALRNRKGQVPAEVVPDPMDMSLDKAEAALVAKELRTLLEEAVPLSCALPKVTLPNYDNVPGNLMLSALGLRLGDRVLLDGQKTGTLRFCGTTEFASGQWVGVELDEPEGKNDGSVGGVRYFICPPKQGLFASVSKISKAVDAPPSSVTSTPRTPRMDFSRVTGKGRREHKGKKKTPSSPSLGSLQQRDGAKAEVGDQVLVAGQKQGIVRFYGKTDFAPGYWYGIELDQPTGKHDGSVFGVRYFTCPPRHGVFAPASRIQRIGGSTDSPGDSVGAKKVHQVTMTQPKRTFTTVRTPKDIASENSISRLLFCCWFPWMLRAEMQS.

A disordered region spans residues 1–49 (MTKTDPAPMAPPPRGEEEEEEEEDEPVPEAPSPTQERRQKPVVHPSAPA). Residues 16–27 (EEEEEEEEDEPV) are compositionally biased toward acidic residues. ANK repeat units lie at residues 117–158 (TDMT…LRSR), 160–191 (TNMN…VVNS), and 197–229 (NHGS…LRNR). One can recognise a CAP-Gly 1 domain in the interval 314-356 (GTTEFASGQWVGVELDEPEGKNDGSVGGVRYFICPPKQGLFAS). Residues 365–413 (DAPPSSVTSTPRTPRMDFSRVTGKGRREHKGKKKTPSSPSLGSLQQRDG) are disordered. Low complexity predominate over residues 367–377 (PPSSVTSTPRT). T374 is subject to Phosphothreonine. A compositionally biased stretch (basic residues) spans 387–399 (GKGRREHKGKKKT). Residues 400–410 (PSSPSLGSLQQ) show a composition bias toward polar residues. Residue S401 is modified to Phosphoserine. A CAP-Gly 2 domain is found at 436-478 (GKTDFAPGYWYGIELDQPTGKHDGSVFGVRYFTCPPRHGVFAP). The tract at residues 488 to 547 (STDSPGDSVGAKKVHQVTMTQPKRTFTTVRTPKDIASENSISRLLFCCWFPWMLRAEMQS) is goLD. S-palmitoyl cysteine attachment occurs at residues C534 and C535.

In terms of assembly, homodimer. Interacts with AKT1 and AKT2; when AKT1 and AKT2 are phosphorylated and activated, affinity is higher for AKT2. Interacts with ZDHHC13 (via ANK repeats). Interacts with ZDHHC17 (via ANK repeats). Post-translationally, palmitoylation by ZDHHC17 regulates association with the plasma membrane.

The protein resides in the cell membrane. It localises to the cytoplasm. The protein localises to the golgi apparatus. Its subcellular location is the golgi stack. Functionally, functions as a cytoplasmic linker protein. Involved in TGN-endosome dynamics. May modulate the cellular compartmentalization of AKT kinase family and promote its cell membrane localization, thereby playing a role in glucose transport in adipocytes. This chain is CAP-Gly domain-containing linker protein 3 (CLIP3), found in Homo sapiens (Human).